We begin with the raw amino-acid sequence, 109 residues long: Mitochondrial pyruvate carrier 1 (109 aa).

Alanine 2 carries the post-translational modification N-acetylalanine. At 2–20 (AGALVRKAADYVRSKDFRD) the chain is on the mitochondrial matrix side. The chain crosses the membrane as a helical span at residues 21-41 (YLMSTHFWGPVANWGLPIAAI). The Mitochondrial intermembrane segment spans residues 42 to 52 (NDMKKSPEIIS). The helical transmembrane segment at 53–71 (GRMTFALCCYSLTFMRFAY) threads the bilayer. At lysine 72 the chain carries N6-acetyllysine. Residues 72-109 (KVQPRNWLLFACHATNEVAQLIQGGRLIKHEMTKTASA) are Mitochondrial matrix-facing.

The protein belongs to the mitochondrial pyruvate carrier (MPC) (TC 2.A.105) family. In terms of assembly, homodimer. Forms heterodimer with MPC2. The heterodimer is the more stable and dominant form.

It is found in the mitochondrion inner membrane. It catalyses the reaction pyruvate(out) + H(+)(out) = pyruvate(in) + H(+)(in). Mediates the uptake of pyruvate into mitochondria. In Homo sapiens (Human), this protein is Mitochondrial pyruvate carrier 1 (MPC1).